Here is an 885-residue protein sequence, read N- to C-terminus: DNA polymerase eta (885 aa).

The UmuC domain occupies 18 to 274 (VLLVDMDCFF…LPVGKIKGLG (257 aa)). Mg(2+) contacts are provided by Asp22 and Met23. Asp22 and Met23 together coordinate Mn(2+). Arg70 provides a ligand contact to a 2'-deoxyribonucleoside 5'-triphosphate. The Mg(2+) site is built by Asp125 and Glu126. Mn(2+)-binding residues include Asp125 and Glu126. Residue Glu126 is part of the active site. 2 disordered regions span residues 599–653 (AIEA…DLYV) and 658–677 (VPPT…RKFD). Residues 608-618 (FEEDTEEETEL) show a composition bias toward acidic residues. The span at 628-649 (EGQSSDAGQEQDPNTLNDSTGN) shows a compositional bias: polar residues. Residues 701 to 737 (DILPTIKCDQCGANIPDEVKSLQTHRDHHFAQELSRT) form a UBZ3-type 1 zinc finger. Cys708, Cys711, His725, and His729 together coordinate Zn(2+). The disordered stretch occupies residues 722–783 (LQTHRDHHFA…YSTAPPSNSI (62 aa)). Residues 739–748 (RSTEREERTQ) are compositionally biased toward basic and acidic residues. Positions 766-780 (TAGSGSSSYSTAPPS) are enriched in low complexity. Residues 798–832 (SDPQMNQCPECKAFIKCVDMPEHLDYHVARNLQRE) form a UBZ3-type 2 zinc finger. The Zn(2+) site is built by Cys805, Cys808, His820, and His824. Positions 846–870 (NKEKISPVQPKKQSQKKLNSTISAS) are disordered.

The protein belongs to the DNA polymerase type-Y family. In terms of assembly, interacts (via C-terminus) with nopo. The cofactor is Mg(2+). Requires Mn(2+) as cofactor. Ubiquitination enhanced by nopo. As to expression, expressed in ovaries and testes.

The protein resides in the nucleus. It carries out the reaction DNA(n) + a 2'-deoxyribonucleoside 5'-triphosphate = DNA(n+1) + diphosphate. With respect to regulation, the enzyme in complex with the DNA substrate binds a third divalent metal cation. This binding is essential for catalyzing the DNA synthesis. In terms of biological role, DNA polymerase specifically involved in the DNA repair by translesion synthesis (TLS). Plays an important role in translesion synthesis, where the normal high-fidelity DNA polymerases cannot proceed and DNA synthesis stalls. Inserts one or 2 nucleotide(s) opposite the lesion. During homologous recombination (HR) repair, has a overlapping role with the error-prone translesion polymerase PolZ1/DNApol-zeta to initiate repair synthesis that is completed by end joining or another polymerase that can bind and reinitiate synthesis. Particularly important for the repair of UV-induced pyrimidine dimers and for hydroxyurea (HU)-induced DNA damage. Although inserts the correct base, may cause base transitions and transversions depending upon the context. Forms a Schiff base with 5'-deoxyribose phosphate at abasic sites, but does not have any lyase activity, preventing the release of the 5'-deoxyribose phosphate (5'-dRP) residue. This covalent trapping of the enzyme by the 5'-dRP residue inhibits its DNA synthetic activity during base excision repair, thereby avoiding high incidence of mutagenesis. The polypeptide is DNA polymerase eta (Drosophila melanogaster (Fruit fly)).